Here is a 418-residue protein sequence, read N- to C-terminus: GTPase Obg (418 aa).

In terms of domain architecture, Obg spans 1–156 (MKFIDEITLN…KKLTLVLKVL (156 aa)). The OBG-type G domain maps to 157–324 (ADVGFVGKPS…LKEALWQSVK (168 aa)). GTP is bound by residues 163 to 170 (GKPSAGKS), 188 to 192 (FTTLV), 209 to 212 (DLPG), 278 to 281 (NKKD), and 305 to 307 (SAL). Mg(2+) contacts are provided by Ser-170 and Thr-190. One can recognise an OCT domain in the interval 339 to 417 (VFINFEADFN…IYDYEFVWGN (79 aa)).

It belongs to the TRAFAC class OBG-HflX-like GTPase superfamily. OBG GTPase family. In terms of assembly, monomer. It depends on Mg(2+) as a cofactor.

It localises to the cytoplasm. In terms of biological role, an essential GTPase which binds GTP, GDP and possibly (p)ppGpp with moderate affinity, with high nucleotide exchange rates and a fairly low GTP hydrolysis rate. Plays a role in control of the cell cycle, stress response, ribosome biogenesis and in those bacteria that undergo differentiation, in morphogenesis control. In Mycoplasmopsis pulmonis (strain UAB CTIP) (Mycoplasma pulmonis), this protein is GTPase Obg.